Consider the following 181-residue polypeptide: Large ribosomal subunit protein uL5 (181 aa).

Belongs to the universal ribosomal protein uL5 family. Part of the 50S ribosomal subunit; part of the 5S rRNA/L5/L18/L25 subcomplex. Contacts the 5S rRNA and the P site tRNA. Forms a bridge to the 30S subunit in the 70S ribosome.

In terms of biological role, this is one of the proteins that bind and probably mediate the attachment of the 5S RNA into the large ribosomal subunit, where it forms part of the central protuberance. In the 70S ribosome it contacts protein S13 of the 30S subunit (bridge B1b), connecting the 2 subunits; this bridge is implicated in subunit movement. Contacts the P site tRNA; the 5S rRNA and some of its associated proteins might help stabilize positioning of ribosome-bound tRNAs. This Campylobacter jejuni subsp. jejuni serotype O:6 (strain 81116 / NCTC 11828) protein is Large ribosomal subunit protein uL5.